The following is a 929-amino-acid chain: SCY1-like protein 2 (929 aa).

Residues 32 to 327 (FDVGRHIASG…ADQMTKIPFF (296 aa)) enclose the Protein kinase domain. An HEAT repeat occupies 443 to 479 (DEIKNSVLPMVYRALEAPSIQIQELCLNIIPTFANLI). Residues 661 to 701 (ESENKEDGLQNKHKRASLTLEEKQKLAKEQEQAQKLKSQQP) adopt a coiled-coil conformation. At serine 677 the chain carries Phosphoserine. Residues 684-694 (QKLAKEQEQAQ) show a composition bias toward basic and acidic residues. Disordered stretches follow at residues 684–709 (QKLAKEQEQAQKLKSQQPLKPQVHTP) and 906–929 (NFAQPPTTMTNSSSASNDLKDLFG). The segment covering 695–705 (KLKSQQPLKPQ) has biased composition (low complexity). The interval 699–929 (QQPLKPQVHT…ASNDLKDLFG (231 aa)) is necessary for interaction with AP2 complex and clathrin, interaction with clathrin is necessary for its targeting to the TGN and endosomal membranes. Phosphothreonine is present on threonine 708. Residues 912-922 (TTMTNSSSASN) show a composition bias toward polar residues.

It belongs to the protein kinase superfamily. As to quaternary structure, interacts with clathrin and AP2B1; the interaction mediates the association with the AP-2 complex. In terms of processing, could autophosphorylate in presence of poly-L-lysine.

It localises to the cytoplasmic vesicle. The protein localises to the clathrin-coated vesicle. It is found in the golgi apparatus. Its subcellular location is the trans-Golgi network membrane. The protein resides in the endosome membrane. Component of the AP2-containing clathrin coat that may regulate clathrin-dependent trafficking at plasma membrane, TGN and endosomal system. A possible serine/threonine-protein kinase toward the beta2-subunit of the plasma membrane adapter complex AP2 and other proteins in presence of poly-L-lysine has not been confirmed. By regulating the expression of excitatory receptors at synapses, plays an essential role in neuronal function and signaling and in brain development. This chain is SCY1-like protein 2, found in Homo sapiens (Human).